We begin with the raw amino-acid sequence, 572 residues long: MEYWKHTNHGKDAGNELETSMATHGNKLTNKIIYILWTIILVLLSIVFIIVLINSIKSEKAHESLLQDINNEFMEITEKIQMASDNTNDLIQSGVNTRLLTIQSHVQNYIPISLTQQMSDLRKFISEITIRNDNQEVLPQRITHDVGIKPLNPDDFWRCTSGLPSLMKTPKIRLMPGPGLLAMPTTVDGCVRTPSLVINDLIYAYTSNLITRGCQDIGKSYQVLQIGTITVNSDLVPDLNPRISHTFNINDNRKSCSLALLNTDVYQLCSTPKVDERSDYASSGIEDIVLDIVNYDGSISTTRFKNNNISFDQPYAALYPSVGPGIYYKGKIIFLGYGGLEHPINENVICNTTGCPGKTQRDCNQASHSPWFSDRRMVNSIIVVDKGLNSIPKLKVWTISMRQNYWGSEGRLLLLGNKIYIYTRSTSWHSKLQLGIIDITDYSDIRIKWTWHNVLSRPGNNECPWGHSCPDGCITGVYTDAYPLNPTGSIVSSVILDSQKSRVNPVITYSTATERVNELAIRNRTLSAGYTTTSCITHYNKGYCFHIVEINQKSLNTFQPMLFKTEIPKSCS.

The Intravirion segment spans residues 1-31 (MEYWKHTNHGKDAGNELETSMATHGNKLTNK). Residues 32–52 (IIYILWTIILVLLSIVFIIVL) traverse the membrane as a helical segment. The Virion surface segment spans residues 53 to 572 (INSIKSEKAH…FKTEIPKSCS (520 aa)). 2 disulfide bridges follow: Cys-190–Cys-214 and Cys-256–Cys-269. The tract at residues 252 to 257 (NRKSCS) is involved in neuraminidase activity. 2 N-linked (GlcNAc...) asparagine; by host glycosylation sites follow: Asn-308 and Asn-351. Cystine bridges form between Cys-355–Cys-469 and Cys-463–Cys-473. An N-linked (GlcNAc...) asparagine; by host glycan is attached at Asn-523. An intrachain disulfide couples Cys-535 to Cys-544.

Belongs to the paramyxoviruses hemagglutinin-neuraminidase family. In terms of assembly, homotetramer; composed of disulfide-linked homodimers. Interacts with F protein trimer.

It is found in the virion membrane. The protein localises to the host cell membrane. It carries out the reaction Hydrolysis of alpha-(2-&gt;3)-, alpha-(2-&gt;6)-, alpha-(2-&gt;8)- glycosidic linkages of terminal sialic acid residues in oligosaccharides, glycoproteins, glycolipids, colominic acid and synthetic substrates.. Attaches the virus to sialic acid-containing cell receptors and thereby initiating infection. Binding of HN protein to the receptor induces a conformational change that allows the F protein to trigger virion/cell membranes fusion. In terms of biological role, neuraminidase activity ensures the efficient spread of the virus by dissociating the mature virions from the neuraminic acid containing glycoproteins. This Homo sapiens (Human) protein is Hemagglutinin-neuraminidase (HN).